The sequence spans 76 residues: Small proline-rich protein 2F (76 aa).

3 repeat units span residues 21 to 29 (PKCPEPCSP), 30 to 38 (SVCPEPCPP), and 39 to 47 (PKCPEPCPE). The interval 21–47 (PKCPEPCSPSVCPEPCPPPKCPEPCPE) is 3 X 9 AA approximate tandem repeats. The tract at residues 53 to 76 (SFQQKCPPVQPPPPCQQKCPPKSK) is disordered.

The protein belongs to the cornifin (SPRR) family. As to expression, expressed in uterus.

The protein resides in the cytoplasm. Its function is as follows. Cross-linked envelope protein of keratinocytes. It is a keratinocyte protein that first appears in the cell cytosol, but ultimately becomes cross-linked to membrane proteins by transglutaminase. All that results in the formation of an insoluble envelope beneath the plasma membrane. This chain is Small proline-rich protein 2F (Sprr2f), found in Mus musculus (Mouse).